A 351-amino-acid polypeptide reads, in one-letter code: Protein-glutamate methylesterase/protein-glutamine glutaminase (351 aa).

The Response regulatory domain maps to 6–123; that stretch reads RVLVVDDSPT…ARPFGDLADK (118 aa). The residue at position 57 (aspartate 57) is a 4-aspartylphosphate. The 193-residue stretch at 154–346 folds into the CheB-type methylesterase domain; sequence YRAGRKVVAI…EEILKLTTAR (193 aa). Active-site residues include serine 166, histidine 192, and aspartate 288.

It belongs to the CheB family. In terms of processing, phosphorylated by CheA. Phosphorylation of the N-terminal regulatory domain activates the methylesterase activity.

The protein localises to the cytoplasm. The catalysed reaction is [protein]-L-glutamate 5-O-methyl ester + H2O = L-glutamyl-[protein] + methanol + H(+). The enzyme catalyses L-glutaminyl-[protein] + H2O = L-glutamyl-[protein] + NH4(+). Functionally, involved in chemotaxis. Part of a chemotaxis signal transduction system that modulates chemotaxis in response to various stimuli. Catalyzes the demethylation of specific methylglutamate residues introduced into the chemoreceptors (methyl-accepting chemotaxis proteins or MCP) by CheR. Also mediates the irreversible deamidation of specific glutamine residues to glutamic acid. In Agrobacterium fabrum (strain C58 / ATCC 33970) (Agrobacterium tumefaciens (strain C58)), this protein is Protein-glutamate methylesterase/protein-glutamine glutaminase.